The primary structure comprises 55 residues: Large ribosomal subunit protein bL33 (55 aa).

This sequence belongs to the bacterial ribosomal protein bL33 family.

This is Large ribosomal subunit protein bL33 from Alcanivorax borkumensis (strain ATCC 700651 / DSM 11573 / NCIMB 13689 / SK2).